A 1033-amino-acid polypeptide reads, in one-letter code: Translation initiation factor IF-2 (1033 aa).

The interval 49–432 (AFQQGGGNGR…APSVGGVMLP (384 aa)) is disordered. Low complexity predominate over residues 59 to 113 (SAGRPAAPKKAAPRPSAPSPAQAGPSQAAPAAGDRAAAPRPSAAPKAPAAQQPAA). 2 stretches are compositionally biased toward pro residues: residues 114–140 (PSAP…PAPA) and 148–164 (PAAP…PSGP). The span at 171–189 (PGAPKPGGARPSGPGQDRG) shows a compositional bias: low complexity. Residues 190 to 201 (QQGGQGRPGGQR) show a composition bias toward gly residues. Residues 236 to 246 (APRPQGGPRPG) show a composition bias toward pro residues. Residues 247–268 (GPGGAPGGGPRPQGPGGQGGGP) show a composition bias toward gly residues. The segment covering 305-314 (MMPQRPAAGP) has biased composition (low complexity). Residues 318–401 (PGGGGRGPGG…GTQGAFGRPG (84 aa)) show a composition bias toward gly residues. Positions 405-414 (RRGRKSKRQR) are enriched in basic residues. Residues 526-698 (VRPPVVTVMG…VVLTADASLD (173 aa)) enclose the tr-type G domain. A G1 region spans residues 535 to 542 (GHVDHGKT). A GTP-binding site is contributed by 535 to 542 (GHVDHGKT). The tract at residues 560–564 (GITQH) is G2. Residues 585–588 (DTPG) form a G3 region. GTP contacts are provided by residues 585-589 (DTPGH) and 639-642 (NKID). Residues 639 to 642 (NKID) are G4. The tract at residues 675–677 (SAK) is G5.

Belongs to the TRAFAC class translation factor GTPase superfamily. Classic translation factor GTPase family. IF-2 subfamily.

It is found in the cytoplasm. Its function is as follows. One of the essential components for the initiation of protein synthesis. Protects formylmethionyl-tRNA from spontaneous hydrolysis and promotes its binding to the 30S ribosomal subunits. Also involved in the hydrolysis of GTP during the formation of the 70S ribosomal complex. The polypeptide is Translation initiation factor IF-2 (Streptomyces coelicolor (strain ATCC BAA-471 / A3(2) / M145)).